Here is a 233-residue protein sequence, read N- to C-terminus: Lipoprotein-releasing system ATP-binding protein LolD (233 aa).

Residues 6-233 (LQCDNLCKRY…TAELSLMGAE (228 aa)) form the ABC transporter domain. Residue 42 to 49 (GSSGSGKS) coordinates ATP.

Belongs to the ABC transporter superfamily. Lipoprotein translocase (TC 3.A.1.125) family. In terms of assembly, the complex is composed of two ATP-binding proteins (LolD) and two transmembrane proteins (LolC and LolE).

It is found in the cell inner membrane. Its function is as follows. Part of the ABC transporter complex LolCDE involved in the translocation of mature outer membrane-directed lipoproteins, from the inner membrane to the periplasmic chaperone, LolA. Responsible for the formation of the LolA-lipoprotein complex in an ATP-dependent manner. Such a release is dependent of the sorting-signal (absence of an Asp at position 2 of the mature lipoprotein) and of LolA. This Escherichia coli (strain K12) protein is Lipoprotein-releasing system ATP-binding protein LolD.